The following is a 347-amino-acid chain: Ketol-acid reductoisomerase (NADP(+)) (347 aa).

The KARI N-terminal Rossmann domain maps to 3–182; the sequence is TKMFYDKDID…GSGCAGILET (180 aa). NADP(+)-binding positions include 26 to 29, Arg-49, Ser-53, and 83 to 86; these read YGAQ and DELQ. Residue His-108 is part of the active site. Residue Gly-134 participates in NADP(+) binding. Residues 183 to 328 form the KARI C-terminal knotted domain; the sequence is TFEEETTEDL…KKVRAMMPWI (146 aa). Positions 191, 195, 227, and 231 each coordinate Mg(2+). Substrate is bound at residue Ser-252.

It belongs to the ketol-acid reductoisomerase family. Requires Mg(2+) as cofactor.

It carries out the reaction (2R)-2,3-dihydroxy-3-methylbutanoate + NADP(+) = (2S)-2-acetolactate + NADPH + H(+). The enzyme catalyses (2R,3R)-2,3-dihydroxy-3-methylpentanoate + NADP(+) = (S)-2-ethyl-2-hydroxy-3-oxobutanoate + NADPH + H(+). Its pathway is amino-acid biosynthesis; L-isoleucine biosynthesis; L-isoleucine from 2-oxobutanoate: step 2/4. The protein operates within amino-acid biosynthesis; L-valine biosynthesis; L-valine from pyruvate: step 2/4. Functionally, involved in the biosynthesis of branched-chain amino acids (BCAA). Catalyzes an alkyl-migration followed by a ketol-acid reduction of (S)-2-acetolactate (S2AL) to yield (R)-2,3-dihydroxy-isovalerate. In the isomerase reaction, S2AL is rearranged via a Mg-dependent methyl migration to produce 3-hydroxy-3-methyl-2-ketobutyrate (HMKB). In the reductase reaction, this 2-ketoacid undergoes a metal-dependent reduction by NADPH to yield (R)-2,3-dihydroxy-isovalerate. The sequence is that of Ketol-acid reductoisomerase (NADP(+)) from Leuconostoc mesenteroides subsp. cremoris.